A 319-amino-acid chain; its full sequence is NAP1-binding protein (319 aa).

The span at 34 to 43 (SALRSRRKQM) shows a compositional bias: basic residues. Residues 34-74 (SALRSRRKQMRPTGKSVLKRPRKVTDRKTEEKIRTNRRKTP) are disordered. A compositionally biased stretch (basic and acidic residues) spans 56-67 (KVTDRKTEEKIR). A phosphoserine mark is found at S251 and S260. Residues 278-319 (EMQPLQENISPACPTPPYRSRETEKEDETLSPISVDFSSYLS) form a disordered region.

Interacts with NDC1 and MPS2.

This Saccharomyces cerevisiae (strain ATCC 204508 / S288c) (Baker's yeast) protein is NAP1-binding protein (NBP1).